The chain runs to 441 residues: Ribulose bisphosphate carboxylase large chain (441 aa).

Substrate-binding residues include Asn-89 and Thr-139. Lys-141 (proton acceptor) is an active-site residue. Lys-143 serves as a coordination point for substrate. Residues Lys-167, Asp-169, and Glu-170 each coordinate Mg(2+). Lys-167 is modified (N6-carboxylysine). The active-site Proton acceptor is His-260. Residues Xaa-261 and Ser-345 each contribute to the substrate site.

This sequence belongs to the RuBisCO large chain family. Type I subfamily. As to quaternary structure, heterohexadecamer of 8 large chains and 8 small chains; disulfide-linked. The disulfide link is formed within the large subunit homodimers. Mg(2+) is required as a cofactor. In terms of processing, the disulfide bond which can form in the large chain dimeric partners within the hexadecamer appears to be associated with oxidative stress and protein turnover.

Its subcellular location is the plastid. The protein localises to the chloroplast. The enzyme catalyses 2 (2R)-3-phosphoglycerate + 2 H(+) = D-ribulose 1,5-bisphosphate + CO2 + H2O. It catalyses the reaction D-ribulose 1,5-bisphosphate + O2 = 2-phosphoglycolate + (2R)-3-phosphoglycerate + 2 H(+). RuBisCO catalyzes two reactions: the carboxylation of D-ribulose 1,5-bisphosphate, the primary event in carbon dioxide fixation, as well as the oxidative fragmentation of the pentose substrate in the photorespiration process. Both reactions occur simultaneously and in competition at the same active site. This chain is Ribulose bisphosphate carboxylase large chain, found in Asclepias exaltata (Poke milkweed).